The primary structure comprises 386 residues: Phosphoglycerate kinase (386 aa).

Substrate-binding positions include Asp21–Asn23, Arg36, His59–Arg62, Arg113, and Arg146. ATP contacts are provided by residues Lys197, Glu314, and Gly340–Thr343.

The protein belongs to the phosphoglycerate kinase family. As to quaternary structure, monomer.

It localises to the cytoplasm. The enzyme catalyses (2R)-3-phosphoglycerate + ATP = (2R)-3-phospho-glyceroyl phosphate + ADP. The protein operates within carbohydrate degradation; glycolysis; pyruvate from D-glyceraldehyde 3-phosphate: step 2/5. The sequence is that of Phosphoglycerate kinase from Vibrio vulnificus (strain CMCP6).